Here is a 395-residue protein sequence, read N- to C-terminus: Pyruvate synthase subunit PorA (395 aa).

Heterotetramer of one alpha, one beta, one delta and one gamma chain.

The catalysed reaction is 2 oxidized [2Fe-2S]-[ferredoxin] + pyruvate + CoA = 2 reduced [2Fe-2S]-[ferredoxin] + acetyl-CoA + CO2 + H(+). This is Pyruvate synthase subunit PorA (porA) from Pyrococcus horikoshii (strain ATCC 700860 / DSM 12428 / JCM 9974 / NBRC 100139 / OT-3).